Consider the following 444-residue polypeptide: D(2) dopamine receptor (444 aa).

Residues Met-1 to Tyr-37 are Extracellular-facing. N-linked (GlcNAc...) asparagine glycosylation is found at Asn-5, Asn-17, and Asn-23. Residues Ala-38–Ser-60 traverse the membrane as a helical segment. The Cytoplasmic portion of the chain corresponds to Arg-61 to Asn-70. Residues Tyr-71–Tyr-93 traverse the membrane as a helical segment. At Leu-94–Asp-108 the chain is on the extracellular side. The cysteines at positions 107 and 182 are disulfide-linked. Residues Ile-109–Ile-130 form a helical membrane-spanning segment. The Cytoplasmic segment spans residues Asp-131–Arg-151. Residues Val-152–Phe-172 traverse the membrane as a helical segment. Topologically, residues Gly-173–Ala-188 are extracellular. The helical transmembrane segment at Phe-189–Tyr-213 threads the bilayer. The tract at residues Lys-211–Gln-374 is interaction with PPP1R9B. Topologically, residues Ile-214–Gln-374 are cytoplasmic. Residues Glu-282–Gly-329 form a disordered region. Residues Met-375–Leu-396 traverse the membrane as a helical segment. The Extracellular portion of the chain corresponds to Asn-397–Ser-410. The cysteines at positions 400 and 402 are disulfide-linked. The helical transmembrane segment at Ala-411–Ile-432 threads the bilayer. Residues Glu-433–Cys-444 lie on the Cytoplasmic side of the membrane. A lipid anchor (S-palmitoyl cysteine) is attached at Cys-444.

It belongs to the G-protein coupled receptor 1 family. In terms of assembly, forms homo- and heterooligomers with DRD4. The interaction with DRD4 may modulate agonist-induced downstream signaling. Interacts with CADPS and CADPS2. Interacts with GPRASP1, PPP1R9B and CLIC6. Interacts with ARRB2. Interacts with HTR2A. Interacts with DRD1. Interacts with KCNA2. In terms of processing, palmitoylated. Palmitoylation which is required for proper localization to the plasma membrane and stability of the receptor could be carried on by ZDHHC4, ZDHHC3 and ZDHHC8. In terms of tissue distribution, expressed in retinal hyaloid vessels at postnatal day 6. As to expression, expressed in the pituitary gland, stratum, brain stem and cortex. Expressed in the brain stem.

Its subcellular location is the cell membrane. It is found in the golgi apparatus membrane. Functionally, dopamine receptor whose activity is mediated by G proteins which inhibit adenylyl cyclase. Positively regulates postnatal regression of retinal hyaloid vessels via suppression of VEGFR2/KDR activity, downstream of OPN5. The polypeptide is D(2) dopamine receptor (Drd2) (Mus musculus (Mouse)).